A 417-amino-acid chain; its full sequence is Creatine kinase U-type, mitochondrial (417 aa).

The N-terminal 39 residues, 1 to 39 (MAGPFSRLLSARPGLRLLALAGAGSLAAGFLLRPEPVRA), are a transit peptide targeting the mitochondrion. The cardiolipin-binding stretch occupies residues 40–64 (ASERRRLYPPSAEYPDLRKHNNCMA). Residues 45–131 (RLYPPSAEYP…FDPVIQERHN (87 aa)) enclose the Phosphagen kinase N-terminal domain. The residue at position 151 (serine 151) is a Phosphoserine. The Phosphagen kinase C-terminal domain maps to 158 to 400 (YVLSSRVRTG…NYLIDCERRL (243 aa)). 161-165 (SSRVR) is an ATP binding site. Position 196 is a phosphoserine (serine 196). Position 213 is a phosphothreonine (threonine 213). Residue histidine 224 participates in ATP binding. Serine 232 carries the post-translational modification Phosphoserine. Residues arginine 269, arginine 325, 353-358 (RGTGGV), and aspartate 368 contribute to the ATP site. Phosphothreonine is present on threonine 355.

It belongs to the ATP:guanido phosphotransferase family. In terms of assembly, exists as an octamer composed of four MTCK homodimers.

Its subcellular location is the mitochondrion inner membrane. It catalyses the reaction creatine + ATP = N-phosphocreatine + ADP + H(+). Its function is as follows. Reversibly catalyzes the transfer of phosphate between ATP and various phosphogens (e.g. creatine phosphate). Creatine kinase isoenzymes play a central role in energy transduction in tissues with large, fluctuating energy demands, such as skeletal muscle, heart, brain and spermatozoa. The sequence is that of Creatine kinase U-type, mitochondrial (CKMT1A) from Homo sapiens (Human).